The primary structure comprises 371 residues: Alanine dehydrogenase (371 aa).

Substrate contacts are provided by R15 and K75. Residue H96 is the Proton donor/acceptor of the active site. NAD(+) contacts are provided by residues S134, 178-179, D198, K203, S220, 239-240, 267-270, R279, and 298-301; these read TA, VL, IAID, and VANM. The active-site Proton donor/acceptor is D270. Positions 323 and 327 each coordinate Mg(2+).

It belongs to the AlaDH/PNT family. In terms of assembly, homohexamer. Trimer of dimers. Mg(2+) is required as a cofactor.

The protein resides in the secreted. The catalysed reaction is L-alanine + NAD(+) + H2O = pyruvate + NH4(+) + NADH + H(+). It functions in the pathway amino-acid degradation; L-alanine degradation via dehydrogenase pathway; NH(3) and pyruvate from L-alanine: step 1/1. Its function is as follows. Catalyzes the reversible reductive amination of pyruvate to L-alanine. However, since the physiological environment of M.tuberculosis has a neutral pH, it can be assumed that the enzyme catalyzes exclusively the formation of L-alanine. May play a role in cell wall synthesis as L-alanine is an important constituent of the peptidoglycan layer. The sequence is that of Alanine dehydrogenase (ald) from Mycobacterium tuberculosis (strain CDC 1551 / Oshkosh).